The primary structure comprises 210 residues: Uracil phosphoribosyltransferase (210 aa).

Residues arginine 80, arginine 105, and 132-140 contribute to the 5-phospho-alpha-D-ribose 1-diphosphate site; that span reads DPMLATGGS. Residues isoleucine 195 and 200–202 contribute to the uracil site; that span reads GDA. Position 201 (aspartate 201) interacts with 5-phospho-alpha-D-ribose 1-diphosphate.

This sequence belongs to the UPRTase family. The cofactor is Mg(2+).

The catalysed reaction is UMP + diphosphate = 5-phospho-alpha-D-ribose 1-diphosphate + uracil. Its pathway is pyrimidine metabolism; UMP biosynthesis via salvage pathway; UMP from uracil: step 1/1. Allosterically activated by GTP. Its function is as follows. Catalyzes the conversion of uracil and 5-phospho-alpha-D-ribose 1-diphosphate (PRPP) to UMP and diphosphate. The chain is Uracil phosphoribosyltransferase from Thermoanaerobacter pseudethanolicus (strain ATCC 33223 / 39E) (Clostridium thermohydrosulfuricum).